Reading from the N-terminus, the 228-residue chain is Ribulose-phosphate 3-epimerase (228 aa).

S11 lines the substrate pocket. A divalent metal cation is bound by residues H36, D38, and H69. Catalysis depends on D38, which acts as the Proton acceptor. Substrate contacts are provided by residues H69, 145 to 148 (GFCG), 180 to 182 (DGG), and 202 to 203 (AS). D180 serves as a coordination point for a divalent metal cation. D180 functions as the Proton donor in the catalytic mechanism.

It belongs to the ribulose-phosphate 3-epimerase family. The cofactor is a divalent metal cation.

It carries out the reaction D-ribulose 5-phosphate = D-xylulose 5-phosphate. It participates in carbohydrate degradation. Catalyzes the reversible epimerization of D-ribulose 5-phosphate to D-xylulose 5-phosphate. This is Ribulose-phosphate 3-epimerase from Chlamydia muridarum (strain MoPn / Nigg).